We begin with the raw amino-acid sequence, 484 residues long: Glutamyl-tRNA(Gln) amidotransferase subunit B, mitochondrial (484 aa).

Belongs to the GatB/GatE family. GatB subfamily. As to quaternary structure, subunit of the heterotrimeric GatFAB amidotransferase (AdT) complex, composed of A, B and F subunits.

Its subcellular location is the mitochondrion. It carries out the reaction L-glutamyl-tRNA(Gln) + L-glutamine + ATP + H2O = L-glutaminyl-tRNA(Gln) + L-glutamate + ADP + phosphate + H(+). Functionally, allows the formation of correctly charged Gln-tRNA(Gln) through the transamidation of misacylated Glu-tRNA(Gln) in the mitochondria. The reaction takes place in the presence of glutamine and ATP through an activated gamma-phospho-Glu-tRNA(Gln). This chain is Glutamyl-tRNA(Gln) amidotransferase subunit B, mitochondrial, found in Candida tropicalis (strain ATCC MYA-3404 / T1) (Yeast).